A 440-amino-acid polypeptide reads, in one-letter code: Xylose isomerase (440 aa).

Active-site residues include H101 and D104. Residues E232, E268, H271, D296, D307, D309, and D339 each contribute to the Mg(2+) site.

Belongs to the xylose isomerase family. As to quaternary structure, homotetramer. It depends on Mg(2+) as a cofactor.

It is found in the cytoplasm. It carries out the reaction alpha-D-xylose = alpha-D-xylulofuranose. The polypeptide is Xylose isomerase (Salmonella typhi).